We begin with the raw amino-acid sequence, 276 residues long: HTH-type transcriptional activator RhaR (276 aa).

The region spanning 174–272 (ESLFSALNQS…SCTPTEYRSR (99 aa)) is the HTH araC/xylS-type domain. DNA-binding regions (H-T-H motif) lie at residues 191–212 (ADFC…KQQT) and 239–262 (VANI…GKTF).

As to quaternary structure, binds DNA as a dimer.

It localises to the cytoplasm. Functionally, activates expression of the rhaSR operon in response to L-rhamnose. The protein is HTH-type transcriptional activator RhaR of Mannheimia succiniciproducens (strain KCTC 0769BP / MBEL55E).